Consider the following 212-residue polypeptide: uncharacterized protein (212 aa).

Residues G53, E74, and D96 each contribute to the S-adenosyl-L-methionine site.

It belongs to the methyltransferase superfamily. YrrT family.

Its function is as follows. Could be a S-adenosyl-L-methionine-dependent methyltransferase. This is an uncharacterized protein from Anoxybacillus flavithermus (strain DSM 21510 / WK1).